Consider the following 208-residue polypeptide: Uracil phosphoribosyltransferase (208 aa).

5-phospho-alpha-D-ribose 1-diphosphate-binding positions include arginine 78, arginine 103, and aspartate 130–serine 138. Residues isoleucine 193 and glycine 198–alanine 200 contribute to the uracil site. Residue aspartate 199 coordinates 5-phospho-alpha-D-ribose 1-diphosphate.

It belongs to the UPRTase family. Mg(2+) serves as cofactor.

The catalysed reaction is UMP + diphosphate = 5-phospho-alpha-D-ribose 1-diphosphate + uracil. It participates in pyrimidine metabolism; UMP biosynthesis via salvage pathway; UMP from uracil: step 1/1. With respect to regulation, allosterically activated by GTP. In terms of biological role, catalyzes the conversion of uracil and 5-phospho-alpha-D-ribose 1-diphosphate (PRPP) to UMP and diphosphate. This chain is Uracil phosphoribosyltransferase, found in Acholeplasma laidlawii (strain PG-8A).